Consider the following 417-residue polypeptide: MFKYDINIANYDTALWKAIELEAKRQEEHIELIASENYTSPRVMQAQGSILTNKYAEGYSGKRYYGGCVYVDQVETLAIDRAKALFECDYANVQPHSGSQANFAVYTALLKPGDTILGMNLAHGGHLTHGASVNFSGKMYNVISYGVNKNGYIDYEQLNKLATMHKPKMIIGGFSAYSRVVDWDIMRQVADSIKAFLFVDMAHIAGLVAAGVYPNPVPYADVVTTTTHKTLAGPRGGLILAQGGSKEMYKKLDSAVFPGAQGGPLMHVIAGKAIALKEAMEPEFKIYQHQVVKNAKTMVNVFLNRNFNVVSGGTDNHLFLLDLVDKNITGQEADAALSYTNITVNKNIIPNDPQSSFVTSGIRIGTPAITRRGFNETDAYQLANWICDVLENINNEVVLNATKKKVLNICASHPVYS.

(6S)-5,6,7,8-tetrahydrofolate-binding positions include leucine 121 and 125-127 (GHL). Lysine 229 is modified (N6-(pyridoxal phosphate)lysine). (6S)-5,6,7,8-tetrahydrofolate is bound at residue 355-357 (SSF).

Belongs to the SHMT family. In terms of assembly, homodimer. The cofactor is pyridoxal 5'-phosphate.

Its subcellular location is the cytoplasm. The catalysed reaction is (6R)-5,10-methylene-5,6,7,8-tetrahydrofolate + glycine + H2O = (6S)-5,6,7,8-tetrahydrofolate + L-serine. It participates in one-carbon metabolism; tetrahydrofolate interconversion. The protein operates within amino-acid biosynthesis; glycine biosynthesis; glycine from L-serine: step 1/1. Catalyzes the reversible interconversion of serine and glycine with tetrahydrofolate (THF) serving as the one-carbon carrier. This reaction serves as the major source of one-carbon groups required for the biosynthesis of purines, thymidylate, methionine, and other important biomolecules. Also exhibits THF-independent aldolase activity toward beta-hydroxyamino acids, producing glycine and aldehydes, via a retro-aldol mechanism. In Baumannia cicadellinicola subsp. Homalodisca coagulata, this protein is Serine hydroxymethyltransferase.